Consider the following 490-residue polypeptide: Glutamate--tRNA ligase (490 aa).

The 'HIGH' region signature appears at 10 to 20 (PSPTGSLHIGG). The short motif at 251-255 (KLSKR) is the 'KMSKS' region element. An ATP-binding site is contributed by Lys254.

The protein belongs to the class-I aminoacyl-tRNA synthetase family. Glutamate--tRNA ligase type 1 subfamily. In terms of assembly, monomer.

Its subcellular location is the cytoplasm. The catalysed reaction is tRNA(Glu) + L-glutamate + ATP = L-glutamyl-tRNA(Glu) + AMP + diphosphate. In terms of biological role, catalyzes the attachment of glutamate to tRNA(Glu) in a two-step reaction: glutamate is first activated by ATP to form Glu-AMP and then transferred to the acceptor end of tRNA(Glu). The polypeptide is Glutamate--tRNA ligase (Moorella thermoacetica (strain ATCC 39073 / JCM 9320)).